A 95-amino-acid chain; its full sequence is Aspartyl/glutamyl-tRNA(Asn/Gln) amidotransferase subunit C (95 aa).

The protein belongs to the GatC family. In terms of assembly, heterotrimer of A, B and C subunits.

The enzyme catalyses L-glutamyl-tRNA(Gln) + L-glutamine + ATP + H2O = L-glutaminyl-tRNA(Gln) + L-glutamate + ADP + phosphate + H(+). It catalyses the reaction L-aspartyl-tRNA(Asn) + L-glutamine + ATP + H2O = L-asparaginyl-tRNA(Asn) + L-glutamate + ADP + phosphate + 2 H(+). Allows the formation of correctly charged Asn-tRNA(Asn) or Gln-tRNA(Gln) through the transamidation of misacylated Asp-tRNA(Asn) or Glu-tRNA(Gln) in organisms which lack either or both of asparaginyl-tRNA or glutaminyl-tRNA synthetases. The reaction takes place in the presence of glutamine and ATP through an activated phospho-Asp-tRNA(Asn) or phospho-Glu-tRNA(Gln). The chain is Aspartyl/glutamyl-tRNA(Asn/Gln) amidotransferase subunit C from Rhizobium etli (strain CIAT 652).